We begin with the raw amino-acid sequence, 485 residues long: Glutamyl-tRNA(Gln) amidotransferase subunit A (485 aa).

Active-site charge relay system residues include K78 and S153. Catalysis depends on S177, which acts as the Acyl-ester intermediate.

The protein belongs to the amidase family. GatA subfamily. In terms of assembly, heterotrimer of A, B and C subunits.

It carries out the reaction L-glutamyl-tRNA(Gln) + L-glutamine + ATP + H2O = L-glutaminyl-tRNA(Gln) + L-glutamate + ADP + phosphate + H(+). Functionally, allows the formation of correctly charged Gln-tRNA(Gln) through the transamidation of misacylated Glu-tRNA(Gln) in organisms which lack glutaminyl-tRNA synthetase. The reaction takes place in the presence of glutamine and ATP through an activated gamma-phospho-Glu-tRNA(Gln). In Desulfatibacillum aliphaticivorans, this protein is Glutamyl-tRNA(Gln) amidotransferase subunit A.